The sequence spans 263 residues: HTH-type transcriptional repressor NanR (263 aa).

The disordered stretch occupies residues 1–25; it reads MDVMNAFDSQAEDSPTSLGRSLRRR. The HTH gntR-type domain occupies 30-98; sequence KKLSEMVEEE…NGERARVSRP (69 aa). Residues 58 to 77 constitute a DNA-binding region (H-T-H motif); that stretch reads ERELMAFFNVGRPSVREALA.

It belongs to the NanR family.

In terms of biological role, transcriptional repressor that controls expression of the genes required for the catabolism of sialic acids. The polypeptide is HTH-type transcriptional repressor NanR (Salmonella schwarzengrund (strain CVM19633)).